Consider the following 185-residue polypeptide: Ribosome-recycling factor (185 aa).

It belongs to the RRF family.

It is found in the cytoplasm. Responsible for the release of ribosomes from messenger RNA at the termination of protein biosynthesis. May increase the efficiency of translation by recycling ribosomes from one round of translation to another. This chain is Ribosome-recycling factor, found in Roseiflexus castenholzii (strain DSM 13941 / HLO8).